The following is a 481-amino-acid chain: Protein JASON (481 aa).

Positions 226–250 (ECDLDQSNSSNSSENGSSRKPEMGG) are disordered. Over residues 232–241 (SNSSNSSENG) the composition is skewed to low complexity.

In terms of biological role, required for normal spindle orientation at male meiosis II and normal formation of tetrad of microspores. Acts as a positive regulator of PS1 in male sporogenesis. Not involved in female meiosis. This chain is Protein JASON, found in Arabidopsis thaliana (Mouse-ear cress).